The primary structure comprises 611 residues: Glutathione hydrolase proenzyme 2 (611 aa).

Topologically, residues 1–42 (MSPTDTTPLLYSWDDQSRHQDPDWHKLRNYHGAWYRRISRRR) are cytoplasmic. The helical; Signal-anchor for type II membrane protein transmembrane segment at 43 to 63 (FSQFIFAFGLMTLFVLVYSIS) threads the bilayer. Topologically, residues 64 to 611 (SNLHTPTQFT…PRKYGQAAAY (548 aa)) are lumenal. N-linked (GlcNAc...) asparagine glycosylation occurs at Asn-138. Position 147 (Arg-147) interacts with L-glutamate. N-linked (GlcNAc...) asparagine glycans are attached at residues Asn-153, Asn-297, and Asn-396. The Nucleophile role is filled by Thr-420. L-glutamate is bound by residues Thr-438, Asn-440, Gln-459, Asp-462, 490–491 (SS), and 512–513 (GG).

This sequence belongs to the gamma-glutamyltransferase family. As to quaternary structure, heterodimer composed of the light and heavy chains. The active site is located in the light chain. In terms of processing, cleaved by autocatalysis into a large and a small subunit.

Its subcellular location is the vacuole membrane. The enzyme catalyses an N-terminal (5-L-glutamyl)-[peptide] + an alpha-amino acid = 5-L-glutamyl amino acid + an N-terminal L-alpha-aminoacyl-[peptide]. The catalysed reaction is glutathione + H2O = L-cysteinylglycine + L-glutamate. It carries out the reaction an S-substituted glutathione + H2O = an S-substituted L-cysteinylglycine + L-glutamate. It participates in sulfur metabolism; glutathione metabolism. Catalyzes the transfer of the gamma-glutamyl moiety of glutathione (GSH) and other gamma-glutamyl compounds to amino acids and peptides. Major GSH-degrading enzyme, catalyzing the hydrolytic release of L-glutamate from GSH. Plays a role in the turnover of the vacuolar GSH, serving as an alternative nitrogen source during nitrogen starvation. The chain is Glutathione hydrolase proenzyme 2 (ggt2) from Schizosaccharomyces pombe (strain 972 / ATCC 24843) (Fission yeast).